The chain runs to 206 residues: Small ribosomal subunit protein uS4A (206 aa).

An S4 RNA-binding domain is found at 98 to 163 (MRLDNVVYRL…SERFKMFAEN (66 aa)).

It belongs to the universal ribosomal protein uS4 family. Part of the 30S ribosomal subunit. Contacts protein S5. The interaction surface between S4 and S5 is involved in control of translational fidelity.

In terms of biological role, one of the primary rRNA binding proteins, it binds directly to 16S rRNA where it nucleates assembly of the body of the 30S subunit. Functionally, with S5 and S12 plays an important role in translational accuracy. The polypeptide is Small ribosomal subunit protein uS4A (Clostridium perfringens (strain ATCC 13124 / DSM 756 / JCM 1290 / NCIMB 6125 / NCTC 8237 / Type A)).